The sequence spans 608 residues: MHGLLLAAAGLLSLPLHVIAHPQPSTNLAGRGVDLDAYRMADRSSYMNSDDMKLKQPGIASLSGGNYVDTATEVVKRMVPGMTFRMVDDHYVGESGISHVYFRQTMHGMDIDNSDFNVNIGKDGKVLSFGHSFYTGPAPDKAPVEKRDFSDPMKAFHGACKALNLPINADKATVQTMNEHEVMFMGTSGAMSDPQGKLCYMAKEDGTLALTWRVETDMGDNWLLSYVDAKETEKVHNVVDYVSHATYQVYRWPIPDPTEGKRETIENPWNLKTSPFTWISDGKTNYTTTRGNNAIAQANFDGGEDYLNNHRPNNKNLKFEYPYAPNMSPKSYIDASVTQLFYSANMVHDLYYMLGFTEKAGNFQVNNHGQGGKGNDFVILNAQDGSGTNNANFATPPDGKPGRMRVYIWTKAKPARDSSFEAGTVIHEYTHGLSNRLTGGPANAGCLNGMESGGMGEGWGDFFATAIRLKPNDNRNANYVHGEWVNNSPKGNRMYPYSTSLQTNPLVYTSCNKYNEVHAIGTVWGSMLYEVLWNLIDKHGKNDGPTPVFENGVPKDGKYLAMKLVMDGMAIQPCKPTFVQARDAIIDADMNLTKGSNRCEIWKAFAKR.

An N-terminal signal peptide occupies residues 1–20 (MHGLLLAAAGLLSLPLHVIA). The propeptide occupies 21–244 (HPQPSTNLAG…VHNVVDYVSH (224 aa)). The N-linked (GlcNAc...) asparagine glycan is linked to Asn-285. His-427 is a binding site for Zn(2+). Residue Glu-428 is part of the active site. His-431 serves as a coordination point for Zn(2+). N-linked (GlcNAc...) asparagine glycosylation is present at Asn-591.

This sequence belongs to the peptidase M36 family. Requires Zn(2+) as cofactor.

Its subcellular location is the secreted. Its function is as follows. Secreted metalloproteinase probably acting as a virulence factor. This is Extracellular metalloproteinase 5 (MEP5) from Trichophyton tonsurans (Scalp ringworm fungus).